The following is a 311-amino-acid chain: Malate dehydrogenase (311 aa).

Residues 7-13 and D34 each bind NAD(+); that span reads GAAGGIG. Positions 81 and 87 each coordinate substrate. Residues N94 and 117 to 119 contribute to the NAD(+) site; that span reads ITN. Substrate contacts are provided by N119 and R153. H177 acts as the Proton acceptor in catalysis. M227 is a binding site for NAD(+).

Belongs to the LDH/MDH superfamily. MDH type 1 family. In terms of assembly, homodimer.

The catalysed reaction is (S)-malate + NAD(+) = oxaloacetate + NADH + H(+). Catalyzes the reversible oxidation of malate to oxaloacetate. The protein is Malate dehydrogenase of Aeromonas hydrophila subsp. hydrophila (strain ATCC 7966 / DSM 30187 / BCRC 13018 / CCUG 14551 / JCM 1027 / KCTC 2358 / NCIMB 9240 / NCTC 8049).